A 248-amino-acid polypeptide reads, in one-letter code: Probable transcriptional regulatory protein Msil_2305 (248 aa).

The protein belongs to the TACO1 family.

It is found in the cytoplasm. This is Probable transcriptional regulatory protein Msil_2305 from Methylocella silvestris (strain DSM 15510 / CIP 108128 / LMG 27833 / NCIMB 13906 / BL2).